The sequence spans 148 residues: Ribonuclease H (148 aa).

Positions 1-142 (MSDSVELYTD…ADQLANRGVD (142 aa)) constitute an RNase H type-1 domain. Residues Asp-10, Glu-48, Asp-70, and Asp-134 each coordinate Mg(2+). Residues 129-148 (GNERADQLANRGVDEVRAKR) are disordered.

Belongs to the RNase H family. Monomer. Requires Mg(2+) as cofactor.

The protein resides in the cytoplasm. The enzyme catalyses Endonucleolytic cleavage to 5'-phosphomonoester.. In terms of biological role, endonuclease that specifically degrades the RNA of RNA-DNA hybrids. The sequence is that of Ribonuclease H from Pseudomonas putida (strain W619).